The chain runs to 365 residues: sn-glycerol-3-phosphate import ATP-binding protein UgpC (365 aa).

The ABC transporter domain maps to 4 to 234; sequence LSLRNVQKHY…PASTFVAGFI (231 aa). 36-43 is an ATP binding site; it reads GPSGCGKS.

The protein belongs to the ABC transporter superfamily. sn-glycerol-3-phosphate importer (TC 3.A.1.1.3) family. In terms of assembly, the complex is composed of two ATP-binding proteins (UgpC), two transmembrane proteins (UgpA and UgpE) and a solute-binding protein (UgpB).

It is found in the cell inner membrane. It catalyses the reaction sn-glycerol 3-phosphate(out) + ATP + H2O = sn-glycerol 3-phosphate(in) + ADP + phosphate + H(+). Functionally, part of the ABC transporter complex UgpBAEC involved in sn-glycerol-3-phosphate (G3P) import. Responsible for energy coupling to the transport system. The polypeptide is sn-glycerol-3-phosphate import ATP-binding protein UgpC (Ralstonia nicotianae (strain ATCC BAA-1114 / GMI1000) (Ralstonia solanacearum)).